We begin with the raw amino-acid sequence, 592 residues long: AT-rich interactive domain-containing protein 5A (592 aa).

The segment at 1–53 is disordered; that stretch reads MAPPVKGKRKQSEEGEPLDPPVSPQPDGEPRSRSPVRLEEPPEAGREREEEQE. The interval 1-299 is interaction with SOX9; it reads MAPPVKGKRK…AAPPLESPQS (299 aa). Residue serine 23 is modified to Phosphoserine. Residues 28–49 show a composition bias toward basic and acidic residues; the sequence is GEPRSRSPVRLEEPPEAGRERE. The 93-residue stretch at 52–144 folds into the ARID domain; that stretch reads QEEEQAFLVS…LVLPYVRHLK (93 aa). Residues lysine 82 and lysine 91 each participate in a glycyl lysine isopeptide (Lys-Gly) (interchain with G-Cter in ubiquitin) cross-link. The segment at 143–225 is disordered; the sequence is LKGEDDKPLP…RGPAAGPSLP (83 aa). Positions 162–186 are enriched in basic and acidic residues; that stretch reads MAKEPRGDDGATERPKKVKEEKRVD. Serine 253 is subject to Phosphoserine. Residues 277–333 are disordered; the sequence is CRHGAGGEPQAPPAAPPLESPQSPGGPAEDSRHRLTPLEGRQAPGGGLWGETQAGPR. Over residues 286 to 295 the composition is skewed to pro residues; that stretch reads QAPPAAPPLE. Residues serine 438 and serine 463 each carry the phosphoserine modification.

Interacts with SOX9. Interacts with ESR1. Interacts with RORC. Post-translationally, phosphorylated by MAPK14 on serine residues involving a TLR4 signaling pathway upon lipopolysaccharide (LPS) stimulation leading to its ubiquitination and proteasomal degradation. In terms of processing, ubiquitinated leading to proteasomal degradation; involving WWP1 linked to MAPK14-mediated phosphorylation upon LPS stimulation.

The protein localises to the nucleus. Functionally, DNA-binding protein that may regulate transcription and act as a repressor by binding to AT-rich stretches in the promoter region of target genes. May act as repressor and down-regulate enhancer-dependent gene expressison. May positively regulate chondrocyte-specific transcription such as of COL2A1 in collaboration with SOX9 and positively regulate histone H3 acetylation at chondrocyte-specific genes. May stimulate early-stage chondrocyte differentiation and inhibit later stage differention. Can repress ESR1-mediated transcriptional activation; proposed to act as corepressor for selective nuclear hormone receptors. As an RNA-binding protein, involved in the regulation of inflammatory response by stabilizing selective inflammation-related mRNAs, such as STAT3 and TBX21. Also stabilizes IL6 mRNA. Binds to stem loop structures located in the 3'UTRs of IL6, STAT3 and TBX21 mRNAs; at least for STAT3 prevents binding of ZC3H12A to the mRNA stem loop structure thus inhibiting its degradation activity. Contributes to elevated IL6 levels possibly implicated in autoimmunity processes. IL6-dependent stabilization of STAT3 mRNA may promote differentiation of naive CD4+ T-cells into T-helper Th17 cells. In CD4+ T-cells may also inhibit RORC-induced Th17 cell differentiation independently of IL6 signaling. Stabilization of TBX21 mRNA contributes to elevated interferon-gamma secretion in Th1 cells possibly implicated in the establishment of septic shock. Stabilizes TNFRSF4/OX40 mRNA by binding to the conserved stem loop structure in its 3'UTR; thereby competing with the mRNA-destabilizing functions of RC3H1 and endoribonuclease ZC3H12A. The polypeptide is AT-rich interactive domain-containing protein 5A (ARID5A) (Bos taurus (Bovine)).